We begin with the raw amino-acid sequence, 123 residues long: Small ribosomal subunit protein uS12cz/uS12cy (123 aa).

It belongs to the universal ribosomal protein uS12 family. As to quaternary structure, part of the 30S ribosomal subunit.

The protein localises to the plastid. It is found in the chloroplast. Functionally, with S4 and S5 plays an important role in translational accuracy. Located at the interface of the 30S and 50S subunits. The protein is Small ribosomal subunit protein uS12cz/uS12cy (rps12-A) of Drimys granadensis.